An 874-amino-acid polypeptide reads, in one-letter code: Alanine--tRNA ligase (874 aa).

4 residues coordinate Zn(2+): His564, His568, Cys665, and His669.

It belongs to the class-II aminoacyl-tRNA synthetase family. Zn(2+) is required as a cofactor.

It is found in the cytoplasm. It catalyses the reaction tRNA(Ala) + L-alanine + ATP = L-alanyl-tRNA(Ala) + AMP + diphosphate. Its function is as follows. Catalyzes the attachment of alanine to tRNA(Ala) in a two-step reaction: alanine is first activated by ATP to form Ala-AMP and then transferred to the acceptor end of tRNA(Ala). Also edits incorrectly charged Ser-tRNA(Ala) and Gly-tRNA(Ala) via its editing domain. This is Alanine--tRNA ligase from Burkholderia thailandensis (strain ATCC 700388 / DSM 13276 / CCUG 48851 / CIP 106301 / E264).